A 316-amino-acid polypeptide reads, in one-letter code: Ribosomal RNA small subunit methyltransferase H (316 aa).

Residues 35–37 (AGH), Asp-55, Phe-84, Asp-105, and Gln-112 each bind S-adenosyl-L-methionine.

Belongs to the methyltransferase superfamily. RsmH family.

Its subcellular location is the cytoplasm. It carries out the reaction cytidine(1402) in 16S rRNA + S-adenosyl-L-methionine = N(4)-methylcytidine(1402) in 16S rRNA + S-adenosyl-L-homocysteine + H(+). Its function is as follows. Specifically methylates the N4 position of cytidine in position 1402 (C1402) of 16S rRNA. This Streptococcus suis (strain 05ZYH33) protein is Ribosomal RNA small subunit methyltransferase H.